We begin with the raw amino-acid sequence, 184 residues long: MLRKMGEAVARVARKVNETVESGSDTLDLADCKLVSFPICIYKVLRNVSDQIHLITLANNELKSLTSKFMTTFNQLRELRLEGNYLFRLPNEVSSLQHLRAIDLSRNQFQDFPEQLTTLPALETINLEENEIVDVPVEKLAAMPALRVINLRLNPLSADVRVIAPPLIKFDMLMSPEDTRAPPP.

LRR repeat units lie at residues 23–44, 51–72, 75–96, 98–120, 121–141, and 145–167; these read GSDT…IYKV, QIHL…FMTT, QLRE…VSSL, HLRA…TTLP, ALET…EKLA, and ALRV…APPL. Ser-175 bears the Phosphoserine mark.

This Mus musculus (Mouse) protein is Leucine-rich repeat-containing protein 20 (Lrrc20).